The chain runs to 410 residues: MAQLNDNYLKLKAGYLFPEIGRRVKAFSQANPEAKIIRLGIGDVTQPLAPAVLKAFHDGVDDLANKDKFMGYGPEQGYEFLIDTLIEKAYKPLGVELKTSEIFISDGSKCDCANILDIFALDNKVAICDPVYPVYNDTNVMVGRTGEADDKGYYEGLTYLACTEENGFTPAIPKEKVDIIYLCYPNNPTGTVATKEVLKAWVDYALANDAVIFFDAAYEAFITEPGIPHSIYEIEGANRCAIEFRSFSKTAGFTGVRCALTVVPEELLAATGNGEKVSLNKLWNRRQSTKFNGVSYPVQKAAAAVYSDEGWAQIKETIDYYMENARLIREGLQEAGLTVYGGVNAPYIWLKTPNGMSSWDFFDKLLSECHVVGTPGSGFGPSGEGFYRLSAFGDRENVLTAIDRIKKNLA.

Residues Tyr-15 and Gly-42 each contribute to the substrate site. Residues Tyr-72, 108-109 (SK), Tyr-132, Asn-187, Tyr-218, and 246-248 (SFS) each bind pyridoxal 5'-phosphate. 3 residues coordinate substrate: Lys-109, Tyr-132, and Asn-187. Lys-249 is modified (N6-(pyridoxal phosphate)lysine). Pyridoxal 5'-phosphate is bound by residues Arg-257 and Asn-292. Residues Asn-292 and Arg-388 each contribute to the substrate site.

It belongs to the class-I pyridoxal-phosphate-dependent aminotransferase family. LL-diaminopimelate aminotransferase subfamily. As to quaternary structure, homodimer. Pyridoxal 5'-phosphate is required as a cofactor.

The catalysed reaction is (2S,6S)-2,6-diaminopimelate + 2-oxoglutarate = (S)-2,3,4,5-tetrahydrodipicolinate + L-glutamate + H2O + H(+). It participates in amino-acid biosynthesis; L-lysine biosynthesis via DAP pathway; LL-2,6-diaminopimelate from (S)-tetrahydrodipicolinate (aminotransferase route): step 1/1. Involved in the synthesis of meso-diaminopimelate (m-DAP or DL-DAP), required for both lysine and peptidoglycan biosynthesis. Catalyzes the direct conversion of tetrahydrodipicolinate to LL-diaminopimelate. In Syntrophotalea carbinolica (strain DSM 2380 / NBRC 103641 / GraBd1) (Pelobacter carbinolicus), this protein is LL-diaminopimelate aminotransferase.